A 360-amino-acid chain; its full sequence is DNA polymerase IV (360 aa).

Residues 8 to 191 enclose the UmuC domain; that stretch reads VLHVDMDSFF…LPVGRIPGIG (184 aa). Residues aspartate 12 and aspartate 110 each coordinate Mg(2+). Residue glutamate 111 is part of the active site.

It belongs to the DNA polymerase type-Y family. As to quaternary structure, monomer. Mg(2+) is required as a cofactor.

It localises to the cytoplasm. It carries out the reaction DNA(n) + a 2'-deoxyribonucleoside 5'-triphosphate = DNA(n+1) + diphosphate. Functionally, poorly processive, error-prone DNA polymerase involved in untargeted mutagenesis. Copies undamaged DNA at stalled replication forks, which arise in vivo from mismatched or misaligned primer ends. These misaligned primers can be extended by PolIV. Exhibits no 3'-5' exonuclease (proofreading) activity. May be involved in translesional synthesis. This chain is DNA polymerase IV, found in Methanoculleus marisnigri (strain ATCC 35101 / DSM 1498 / JR1).